The chain runs to 95 residues: Large ribosomal subunit protein bL28 (95 aa).

This sequence belongs to the bacterial ribosomal protein bL28 family.

This Orientia tsutsugamushi (strain Ikeda) (Rickettsia tsutsugamushi) protein is Large ribosomal subunit protein bL28.